A 58-amino-acid chain; its full sequence is uncharacterized protein (58 aa).

This is an uncharacterized protein from Yersinia enterocolitica.